Here is a 406-residue protein sequence, read N- to C-terminus: Imidazolonepropionase (406 aa).

Positions 72 and 74 each coordinate Fe(3+). Residues histidine 72 and histidine 74 each coordinate Zn(2+). Residues arginine 81, tyrosine 144, and histidine 177 each contribute to the 4-imidazolone-5-propanoate site. Tyrosine 144 contacts N-formimidoyl-L-glutamate. Histidine 242 serves as a coordination point for Fe(3+). Residue histidine 242 participates in Zn(2+) binding. Position 245 (glutamine 245) interacts with 4-imidazolone-5-propanoate. Aspartate 317 contributes to the Fe(3+) binding site. Aspartate 317 is a binding site for Zn(2+). N-formimidoyl-L-glutamate is bound by residues asparagine 319 and glycine 321. Threonine 322 contributes to the 4-imidazolone-5-propanoate binding site.

Belongs to the metallo-dependent hydrolases superfamily. HutI family. Zn(2+) is required as a cofactor. It depends on Fe(3+) as a cofactor.

Its subcellular location is the cytoplasm. The enzyme catalyses 4-imidazolone-5-propanoate + H2O = N-formimidoyl-L-glutamate. It functions in the pathway amino-acid degradation; L-histidine degradation into L-glutamate; N-formimidoyl-L-glutamate from L-histidine: step 3/3. Catalyzes the hydrolytic cleavage of the carbon-nitrogen bond in imidazolone-5-propanoate to yield N-formimidoyl-L-glutamate. It is the third step in the universal histidine degradation pathway. This chain is Imidazolonepropionase, found in Yersinia pestis bv. Antiqua (strain Antiqua).